The chain runs to 52 residues: Creatine kinase B-type (52 aa).

The 52-residue stretch at 1–52 folds into the Phosphagen kinase C-terminal domain; the sequence is AKVLTLDLYKKLRDKSTPSGFTLDDIIQNEHLGYVLTCPSNLGTXLRAXVHV. A Phosphagen kinase N-terminal domain is found at 1–52; sequence AKVLTLDLYKKLRDKSTPSGFTLDDIIQNEHLGYVLTCPSNLGTXLRAXVHV. ATP is bound by residues Arg13 and Arg47.

This sequence belongs to the ATP:guanido phosphotransferase family. In terms of assembly, dimer of identical or non-identical chains, which can be either B (brain type) or M (muscle type). With MM being the major form in skeletal muscle and myocardium, MB existing in myocardium, and BB existing in many tissues, especially brain. As to expression, expressed in rectal gland, brain, skeletal muscle (at protein level).

The protein localises to the cytoplasm. It is found in the cytosol. It localises to the mitochondrion. Its subcellular location is the basal cell membrane. It catalyses the reaction creatine + ATP = N-phosphocreatine + ADP + H(+). In terms of biological role, reversibly catalyzes the transfer of phosphate between ATP and various phosphogens (e.g. creatine phosphate). Creatine kinase isoenzymes play a central role in energy transduction in tissues with large, fluctuating energy demands, such as skeletal muscle, heart, brain and spermatozoa. The protein is Creatine kinase B-type of Squalus acanthias (Spiny dogfish).